The following is a 682-amino-acid chain: T-box brain protein 1 (682 aa).

Disordered stretches follow at residues 43-83 and 108-127; these read TDNL…RSKL and SQSS…FPYP. Over residues 58–68 the composition is skewed to polar residues; that stretch reads GMTNQSDTDNF. The segment covering 108 to 122 has biased composition (low complexity); that stretch reads SQSSQPQSAATAPSA. Positions 213–393 form a DNA-binding region, T-box; sequence LWLKFHRHQT…HNPFAKGFRD (181 aa). Residue T408 is modified to Phosphothreonine. A Phosphoserine modification is found at S410. Disordered regions lie at residues 447-483 and 588-658; these read PGAG…SPQR and GLAA…KSEV. The span at 462–472 shows a compositional bias: polar residues; that stretch reads PHTNGLLSPQQ. Position 594 is a phosphoserine (S594). Residues 619 to 629 are compositionally biased toward low complexity; it reads SSIKSIDSSDS. S641 carries the post-translational modification Phosphoserine.

Homodimer. Part of a complex containing CASK, TBR1 and TSPYL2; may modulate gene expression in response to neuronal synaptic activity. Interacts with FOXP2. Interacts with FOXP1. Interacts with BCL11A. Brain.

It localises to the nucleus. Transcriptional repressor involved in multiple aspects of cortical development, including neuronal migration, laminar and areal identity, and axonal projection. As transcriptional repressor of FEZF2, it blocks the formation of the corticospinal (CS) tract from layer 6 projection neurons, thereby restricting the origin of CS axons specifically to layer 5 neurons. The protein is T-box brain protein 1 (TBR1) of Homo sapiens (Human).